We begin with the raw amino-acid sequence, 544 residues long: Homeobox protein B-H1 (544 aa).

Over residues 53 to 70 (STTTMSSGGSTTTASGIG) the composition is skewed to low complexity. Disordered stretches follow at residues 53-73 (STTTMSSGGSTTTASGIGKPN), 92-179 (YKQQ…PPTA), 236-308 (GGVG…AFTD), and 471-544 (AANP…QIQV). Residues 95-105 (QQHHQQLHHHN) are compositionally biased toward basic residues. Low complexity predominate over residues 106 to 131 (NNNNSGSSGGSSPAHSNNNNNINGDN). The span at 156–172 (THPHTHPHALMHPHGKL) shows a compositional bias: basic residues. Residues 247-262 (DLDDSSDYHEENEDCD) show a composition bias toward acidic residues. Residues 266–282 (MDDHSVCSNGGKDDDGN) are compositionally biased toward basic and acidic residues. Positions 283–293 (SVKSGSTSDMS) are enriched in polar residues. The segment at residues 299 to 358 (QRKARTAFTDHQLQTLEKSFERQKYLSVQERQELAHKLDLSDCQVKTWYQNRRTKWKRQT) is a DNA-binding region (homeobox). Pro residues predominate over residues 476 to 485 (GPHPVAPPPS). Over residues 492–506 (PSGLVKPIPAHSASA) the composition is skewed to low complexity. Residues 507-516 (SPPPRPPSTP) show a composition bias toward pro residues.

This sequence belongs to the Antp homeobox family. As to expression, B-H1 and B-H2 are abundant in the eye-antenna imaginal disk. Expressed in R1 and R6 cells throughout larval stage until 30 hours after puparium formation, at which time expression is seen in the anterior and posterior primary pigment cells. Coexpressed in embryonic glial cells, neurons of the CNS and PNS, most latitudinal anterior cells of the developing notum and the central circular region of the leg and antennal imaginal disk throughout larval development.

The protein localises to the nucleus. Its function is as follows. B-H1 and B-H2 are regulated by members of the wg signaling pathway; wg and dpp. B-H1 and B-H2 are coexpressed and functionally required in R1 and R6 receptor cells and primary pigment cells for normal eye development. Coexpression is also required for the fate determination of external sensory organs, formation of notal microchaetae, formation of presutural macrochaetae, antennal development and for distal leg morphogenesis; segmentation and specification of tarsal segments 3-5. In Drosophila melanogaster (Fruit fly), this protein is Homeobox protein B-H1 (B-H1).